The sequence spans 957 residues: Glycine dehydrogenase (decarboxylating) (957 aa).

Lys-702 bears the N6-(pyridoxal phosphate)lysine mark.

It belongs to the GcvP family. In terms of assembly, the glycine cleavage system is composed of four proteins: P, T, L and H. The cofactor is pyridoxal 5'-phosphate.

The catalysed reaction is N(6)-[(R)-lipoyl]-L-lysyl-[glycine-cleavage complex H protein] + glycine + H(+) = N(6)-[(R)-S(8)-aminomethyldihydrolipoyl]-L-lysyl-[glycine-cleavage complex H protein] + CO2. The glycine cleavage system catalyzes the degradation of glycine. The P protein binds the alpha-amino group of glycine through its pyridoxal phosphate cofactor; CO(2) is released and the remaining methylamine moiety is then transferred to the lipoamide cofactor of the H protein. The sequence is that of Glycine dehydrogenase (decarboxylating) from Bradyrhizobium sp. (strain BTAi1 / ATCC BAA-1182).